Here is a 106-residue protein sequence, read N- to C-terminus: Insulin-like peptide 03 (106 aa).

The N-terminal stretch at Met1–Thr18 is a signal peptide. A propeptide spanning residues Gln19–Arg34 is cleaved from the precursor. Intrachain disulfides connect Cys37–Cys93, Cys49–Cys106, and Cys92–Cys97. Positions Lys52–Arg82 are cleaved as a propeptide — c peptide.

It belongs to the insulin family.

It is found in the secreted. Its function is as follows. Insulin decreases blood glucose concentration. May have evolved to activate insulin receptors (INSR) in vertebrates. Molecular docking studies reveals unique interaction with the human insulin receptor. In vivo, insulin-like peptide injection reduces blood glucose levels in two models of zebrafish diabetes (streptozotocin- and glucose-induced). Also shorter swimming distance of zebrafish larvae, an effect which is not observed with human insulin. The chain is Insulin-like peptide 03 from Exaiptasia diaphana (Tropical sea anemone).